The primary structure comprises 74 residues: Delta-actitoxin-Amc3a (74 aa).

The N-terminal stretch at 1 to 19 (MNRLIILVVAAVFLGMASA) is a signal peptide. Residues 20–24 (EEDVL) constitute a propeptide that is removed on maturation. Hydroxyproline is present on P29. 3 disulfide bridges follow: C30/C70, C32/C60, and C53/C71. At Q73 the chain carries Glutamine amide.

It belongs to the sea anemone sodium channel inhibitory toxin family. Type I subfamily.

Its subcellular location is the secreted. The protein localises to the nematocyst. Functionally, inhibits voltage-gated sodium channels (Nav). The chain is Delta-actitoxin-Amc3a from Antheopsis maculata (Sea anemone).